The sequence spans 467 residues: Light-independent protochlorophyllide reductase subunit N (467 aa).

[4Fe-4S] cluster-binding residues include Cys-23, Cys-48, and Cys-108.

This sequence belongs to the BchN/ChlN family. Protochlorophyllide reductase is composed of three subunits; ChlL, ChlN and ChlB. Forms a heterotetramer of two ChlB and two ChlN subunits. [4Fe-4S] cluster serves as cofactor.

The catalysed reaction is chlorophyllide a + oxidized 2[4Fe-4S]-[ferredoxin] + 2 ADP + 2 phosphate = protochlorophyllide a + reduced 2[4Fe-4S]-[ferredoxin] + 2 ATP + 2 H2O. It participates in porphyrin-containing compound metabolism; chlorophyll biosynthesis (light-independent). In terms of biological role, component of the dark-operative protochlorophyllide reductase (DPOR) that uses Mg-ATP and reduced ferredoxin to reduce ring D of protochlorophyllide (Pchlide) to form chlorophyllide a (Chlide). This reaction is light-independent. The NB-protein (ChlN-ChlB) is the catalytic component of the complex. The protein is Light-independent protochlorophyllide reductase subunit N of Nostoc sp. (strain PCC 7120 / SAG 25.82 / UTEX 2576).